The primary structure comprises 512 residues: tRNA modification GTPase gtpbp3, mitochondrial (512 aa).

Positions 246–434 (GANIAIVGPP…LLNLLKLNLK (189 aa)) constitute a TrmE-type G domain. GTP is bound by residues 253–260 (GPPNAGKS), 300–304 (DTAGL), and 375–378 (NKSD).

Belongs to the TRAFAC class TrmE-Era-EngA-EngB-Septin-like GTPase superfamily. TrmE GTPase family.

It is found in the mitochondrion. Functionally, GTPase involved in the 5-carboxymethylaminomethyl modification (mnm(5)s(2)U34) of the wobble uridine base in mitochondrial tRNAs. In Dictyostelium discoideum (Social amoeba), this protein is tRNA modification GTPase gtpbp3, mitochondrial (gtpbp3).